We begin with the raw amino-acid sequence, 62 residues long: Photosystem II reaction center protein Z (62 aa).

A run of 2 helical transmembrane segments spans residues 8-28 (AVFALIATSLILVIGVPVVFA) and 41-61 (FSGTSLWIGLVFLVGILNSLI).

It belongs to the PsbZ family. As to quaternary structure, PSII is composed of 1 copy each of membrane proteins PsbA, PsbB, PsbC, PsbD, PsbE, PsbF, PsbH, PsbI, PsbJ, PsbK, PsbL, PsbM, PsbT, PsbY, PsbZ, Psb30/Ycf12, at least 3 peripheral proteins of the oxygen-evolving complex and a large number of cofactors. It forms dimeric complexes.

The protein resides in the plastid. It localises to the chloroplast thylakoid membrane. In terms of biological role, may control the interaction of photosystem II (PSII) cores with the light-harvesting antenna, regulates electron flow through the 2 photosystem reaction centers. PSII is a light-driven water plastoquinone oxidoreductase, using light energy to abstract electrons from H(2)O, generating a proton gradient subsequently used for ATP formation. This chain is Photosystem II reaction center protein Z, found in Piper cenocladum (Ant piper).